The sequence spans 241 residues: 1-(5-phosphoribosyl)-5-[(5-phosphoribosylamino)methylideneamino] imidazole-4-carboxamide isomerase (241 aa).

Catalysis depends on Asp-10, which acts as the Proton acceptor. Asp-129 acts as the Proton donor in catalysis.

The protein belongs to the HisA/HisF family.

It localises to the cytoplasm. The catalysed reaction is 1-(5-phospho-beta-D-ribosyl)-5-[(5-phospho-beta-D-ribosylamino)methylideneamino]imidazole-4-carboxamide = 5-[(5-phospho-1-deoxy-D-ribulos-1-ylimino)methylamino]-1-(5-phospho-beta-D-ribosyl)imidazole-4-carboxamide. It functions in the pathway amino-acid biosynthesis; L-histidine biosynthesis; L-histidine from 5-phospho-alpha-D-ribose 1-diphosphate: step 4/9. This chain is 1-(5-phosphoribosyl)-5-[(5-phosphoribosylamino)methylideneamino] imidazole-4-carboxamide isomerase, found in Salinispora arenicola (strain CNS-205).